The following is a 279-amino-acid chain: Glutamate racemase (279 aa).

Residues 13–14 (DS) and 45–46 (YG) each bind substrate. Cys-76 (proton donor/acceptor) is an active-site residue. 77–78 (NT) lines the substrate pocket. Catalysis depends on Cys-185, which acts as the Proton donor/acceptor. Substrate is bound at residue 186–187 (TH).

The protein belongs to the aspartate/glutamate racemases family.

The enzyme catalyses L-glutamate = D-glutamate. The protein operates within cell wall biogenesis; peptidoglycan biosynthesis. In terms of biological role, provides the (R)-glutamate required for cell wall biosynthesis. The polypeptide is Glutamate racemase (Synechocystis sp. (strain ATCC 27184 / PCC 6803 / Kazusa)).